A 1388-amino-acid polypeptide reads, in one-letter code: Collagen alpha-1(XV) chain (1388 aa).

A signal peptide spans 1–27; the sequence is MAPRRNNGQCWCLLMLLSVSTPLPAVT. One can recognise a Laminin G-like domain in the interval 66-249; that stretch reads AYSFGPGANV…SSASGETSGL (184 aa). The segment at 223-250 is disordered; that stretch reads TVHPDPRTPEELCDPEESSASGETSGLQ. The interval 229–555 is nonhelical region 1 (NC1); that stretch reads RTPEELCDPE…WITPAQREHV (327 aa). A compositionally biased stretch (polar residues) spans 240 to 249; it reads SSASGETSGL. Ser243 and Ser247 each carry an O-linked (Xyl...) (chondroitin sulfate) serine glycan. An O-linked (GalNAc...) threonine glycan is attached at Thr265. The interval 266 to 301 is disordered; the sequence is QASPKEAKVEPINTPPTPSSPFEDMELSGEPVPEGT. Residues Asn306 and Asn324 are each glycosylated (N-linked (GlcNAc...) asparagine). Residue Ser343 is glycosylated (O-linked (Xyl...) (chondroitin sulfate) serine). A run of 4 repeats spans residues 358–408, 409–459, 460–509, and 510–555. Positions 358 to 555 are 4 X tandem repeats; the sequence is AATAAGLAEV…WITPAQREHV (198 aa). Positions 371 to 795 are disordered; it reads TAGEAEASSV…VGPPGPRGPP (425 aa). Over residues 379 to 392 the composition is skewed to polar residues; it reads SVPTGGPTLSMSTE. Low complexity predominate over residues 409–420; sequence AATAAGEAEALA. The span at 452–472 shows a compositional bias: polar residues; sequence GPSSEDSLTTAAAATEVSLST. The segment covering 510 to 527 has biased composition (low complexity); that stretch reads AAATTEEPLITAGGEESG. Positions 528 to 540 are enriched in pro residues; that stretch reads SPPPDGPPLPLPT. The segment at 556–573 is triple-helical region 1 (COL1); the sequence is GMKGQAGPKGEKGDAGEE. The nonhelical region 2 (NC2) stretch occupies residues 574–618; that stretch reads LPGPPEPSGPVGPTAGAEAEGSGLGWGSDVGSGSGDLVGSEQLLR. Residues 595–609 are compositionally biased toward gly residues; it reads SGLGWGSDVGSGSGD. 2 Collagen-like domains span residues 619 to 680 and 681 to 731; these read GPPG…MKGE and KGAR…PPGP. The segment at 619 to 732 is triple-helical region 2 (COL2); that stretch reads GPPGPPGPPG…PGPPGPPGPG (114 aa). Pro residues predominate over residues 620–630; sequence PPGPPGPPGLP. Asn687 carries N-linked (GlcNAc...) asparagine glycosylation. Residues 716-731 are compositionally biased toward pro residues; that stretch reads VMGPPGPPGPPGPPGP. The segment at 733 to 763 is nonhelical region 3 (NC3); it reads CTMGLGFEDTEGSGSTQLLNEPKLSRPTAAI. The O-linked (Xyl...) (chondroitin sulfate) serine glycan is linked to Ser745. Residues 764 to 798 are triple-helical region 3 (COL3); that stretch reads GLKGEKGDRGPKGERGMDGASIVGPPGPRGPPGHI. Positions 766–780 are enriched in basic and acidic residues; the sequence is KGEKGDRGPKGERGM. The segment at 799–822 is nonhelical region 4 (NC4); the sequence is KVLSNSLINITHGFMNFSDIPELV. N-linked (GlcNAc...) asparagine glycosylation is found at Asn807 and Asn814. A Collagen-like 3 domain is found at 823–865; it reads GPPGPDGLPGLPGFPGPRGPKGDTGLPGFPGLKGEQGEKGEPG. The tract at residues 823–867 is triple-helical region 4 (COL4); it reads GPPGPDGLPGLPGFPGPRGPKGDTGLPGFPGLKGEQGEKGEPGAI. Pro residues predominate over residues 827–840; the sequence is PDGLPGLPGFPGPR. The disordered stretch occupies residues 827–864; it reads PDGLPGLPGFPGPRGPKGDTGLPGFPGLKGEQGEKGEP. The tract at residues 868 to 878 is nonhelical region 5 (NC5); sequence LTEDIPLERLM. The Collagen-like 4 domain maps to 879–927; the sequence is GKKGEPGMHGAPGPMGPKGPPGHKGEFGLPGRPGRPGLNGLKGTKGDPG. Residues 879–949 are triple-helical region 5 (COL5); it reads GKKGEPGMHG…PGPPGPPGAV (71 aa). The tract at residues 950 to 983 is nonhelical region 6 (NC6); the sequence is INIKGAIFPIPVRPHCKMPVDTAHPGSPELITFH. The interval 984–1013 is triple-helical region 6 (COL6); it reads GVKGEKGSWGLPGSKGEKGDQGAQGPPGPP. 2 disordered regions span residues 988–1016 and 1029–1133; these read EKGS…PLDL and ENGD…GSRN. The nonhelical region 7 (NC7) stretch occupies residues 1014 to 1027; that stretch reads LDLAYLRHFLNNLK. The interval 1028-1045 is triple-helical region 7 (COL7); the sequence is GENGDKGFKGEKGEKGDI. The span at 1029-1044 shows a compositional bias: basic and acidic residues; that stretch reads ENGDKGFKGEKGEKGD. Asn1046 is a glycosylation site (N-linked (GlcNAc...) asparagine). The tract at residues 1046-1052 is nonhelical region 8 (NC8); sequence NGSFLMS. The interval 1053–1107 is triple-helical region 8 (COL8); sequence GPPGLPGNPGPAGQKGETVVGPQGPPGAPGLPGPPGFGRPGDPGPPGPPGPPGPP. 2 stretches are compositionally biased toward pro residues: residues 1075-1107 and 1117-1126; these read QGPP…PGPP and PGPPGPPGQP. The nonhelical region 9 (NC9) stretch occupies residues 1108–1117; that stretch reads AILGAAVALP. Positions 1118 to 1132 are triple-helical region 9 (COL9); that stretch reads GPPGPPGQPGLPGSR. Residues 1133–1388 form a nonhelical region 10 (NC10) region; that stretch reads NLVTAFSNMD…ENSFMTDARK (256 aa). 2 disulfide bridges follow: Cys1237-Cys1377 and Cys1339-Cys1369.

Belongs to the multiplexin collagen family. As to quaternary structure, trimer; disulfide-linked. Interacts moderately with EFEMP2. Post-translationally, prolines at the third position of the tripeptide repeating unit (G-X-Y) are hydroxylated in some or all of the chains. O-glycosylated; with core 1 or possibly core 8 glycans. Contains chondroitin sulfate. In terms of tissue distribution, detected in fibroblasts and urine (at protein level). Detected in placenta (at protein level). Expressed predominantly in internal organs such as adrenal gland, pancreas and kidney.

Its subcellular location is the secreted. The protein resides in the extracellular space. The protein localises to the extracellular matrix. In terms of biological role, structural protein that stabilizes microvessels and muscle cells, both in heart and in skeletal muscle. Restin potently inhibits angiogenesis. This is Collagen alpha-1(XV) chain (COL15A1) from Homo sapiens (Human).